The following is a 273-amino-acid chain: 2,3,4,5-tetrahydropyridine-2,6-dicarboxylate N-succinyltransferase (273 aa).

2 residues coordinate substrate: R104 and D141.

Belongs to the transferase hexapeptide repeat family. Homotrimer.

It localises to the cytoplasm. It carries out the reaction (S)-2,3,4,5-tetrahydrodipicolinate + succinyl-CoA + H2O = (S)-2-succinylamino-6-oxoheptanedioate + CoA. Its pathway is amino-acid biosynthesis; L-lysine biosynthesis via DAP pathway; LL-2,6-diaminopimelate from (S)-tetrahydrodipicolinate (succinylase route): step 1/3. The protein is 2,3,4,5-tetrahydropyridine-2,6-dicarboxylate N-succinyltransferase of Blochmanniella pennsylvanica (strain BPEN).